Reading from the N-terminus, the 205-residue chain is Ribonuclease HII (205 aa).

The RNase H type-2 domain maps to 13-205; sequence TIVAGVDEVG…APVKYMLSMC (193 aa). Residues aspartate 19, glutamate 20, and aspartate 114 each contribute to the a divalent metal cation site.

The protein belongs to the RNase HII family. Mn(2+) serves as cofactor. It depends on Mg(2+) as a cofactor.

The protein resides in the cytoplasm. It catalyses the reaction Endonucleolytic cleavage to 5'-phosphomonoester.. Functionally, endonuclease that specifically degrades the RNA of RNA-DNA hybrids. In Blochmanniella floridana, this protein is Ribonuclease HII.